A 987-amino-acid polypeptide reads, in one-letter code: UPF0182 protein DIP0733 (987 aa).

The next 7 membrane-spanning stretches (helical) occupy residues 19 to 39, 63 to 83, 115 to 135, 176 to 196, 212 to 234, 261 to 281, and 290 to 310; these read LTWL…VVDL, IGLF…AGWF, FLVV…QQAW, SVLL…LGGI, YAKV…SYWL, AKIV…SVIV, and ISTV…PIMM. The segment covering 904 to 927 has biased composition (basic and acidic residues); that stretch reads DLGEAKGLKPESQNRDKPEDKEGK. A disordered region spans residues 904–950; sequence DLGEAKGLKPESQNRDKPEDKEGKAPSTPSAPASGSGTTGEAIGKIN. Over residues 928-943 the composition is skewed to low complexity; that stretch reads APSTPSAPASGSGTTG.

It belongs to the UPF0182 family.

It is found in the cell membrane. The protein is UPF0182 protein DIP0733 of Corynebacterium diphtheriae (strain ATCC 700971 / NCTC 13129 / Biotype gravis).